A 501-amino-acid polypeptide reads, in one-letter code: MAAPEPAPRRAREREREREDESEDESDILEESPCGRWQKRREQVNQGNMPGLQSTFLAMDTEEGVEVVWNELHFGDRKAFAAHEEKIQTVFEQLVLVDHPNIVKLHKYWLDTSEACARVIFITEYVSSGSLKQFLKKTKKNHKAMNARAWKRWCTQILSALSFLHACSPPIIHGNLTSDTIFIQHNGLIKIGSVWHRIFSNALPDDLRSPIRAEREELRNLHFFPPEYGEVADGTAVDIFSFGMCALEMAVLEIQTNGDTRVTEEAIARARHSLSDPNMREFILCCLARDPARRPSAHSLLFHRVLFEVHSLKLLAAHCFIQHQYLMPENVVEEKTKAMDLHAVLAELPRPRRPPLQWRYSEVSFMELDKFLEDVRNGIYPLMNFAATRPLGLPRVLAPPPEEVQKAKTPTPEPFDSETRKVIQMQCNLERSEDKARWHLTLLLVLEDRLHRQLTYDLLPTDSAQDLASELVHYGFLHEDDRMKLAAFLESTFLKYRGTQA.

The disordered stretch occupies residues 1–33 (MAAPEPAPRRAREREREREDESEDESDILEESP). Positions 7-19 (APRRARERERERE) are enriched in basic and acidic residues. A compositionally biased stretch (acidic residues) spans 20–30 (DESEDESDILE). Positions 38-306 (QKRREQVNQG…AHSLLFHRVL (269 aa)) constitute a Protein kinase domain. Phosphothreonine is present on residues T409 and T411.

This sequence belongs to the protein kinase superfamily. Ser/Thr protein kinase family.

It is found in the cytoplasm. Its function is as follows. May regulate apoptosis of neural progenitor cells during their differentiation. This Homo sapiens (Human) protein is Nuclear receptor-binding protein 2.